Consider the following 969-residue polypeptide: RNA polymerase-associated protein RapA (969 aa).

Positions 164–334 (EVGRRHAPRV…FARLRLLDSD (171 aa)) constitute a Helicase ATP-binding domain. Residue 177–184 (DEVGLGKT) participates in ATP binding. Positions 280–283 (DEAH) match the DEAH box motif. The 177-residue stretch at 492–668 (RVNWLLEKLK…GSNEALNDVI (177 aa)) folds into the Helicase C-terminal domain.

This sequence belongs to the SNF2/RAD54 helicase family. RapA subfamily. Interacts with the RNAP. Has a higher affinity for the core RNAP than for the holoenzyme. Its ATPase activity is stimulated by binding to RNAP.

Functionally, transcription regulator that activates transcription by stimulating RNA polymerase (RNAP) recycling in case of stress conditions such as supercoiled DNA or high salt concentrations. Probably acts by releasing the RNAP, when it is trapped or immobilized on tightly supercoiled DNA. Does not activate transcription on linear DNA. Probably not involved in DNA repair. The sequence is that of RNA polymerase-associated protein RapA from Vibrio vulnificus (strain YJ016).